A 105-amino-acid polypeptide reads, in one-letter code: Large ribosomal subunit protein uL24 (105 aa).

The protein belongs to the universal ribosomal protein uL24 family. Part of the 50S ribosomal subunit.

In terms of biological role, one of two assembly initiator proteins, it binds directly to the 5'-end of the 23S rRNA, where it nucleates assembly of the 50S subunit. Functionally, one of the proteins that surrounds the polypeptide exit tunnel on the outside of the subunit. This chain is Large ribosomal subunit protein uL24, found in Methylobacterium sp. (strain 4-46).